A 261-amino-acid polypeptide reads, in one-letter code: Small ribosomal subunit protein uS2 (261 aa).

The tract at residues 224 to 261 is disordered; the sequence is GRQGEDDEAVQQEEVAEGVSKDSLEDLKKTVEEGSNEE. Residues 228–239 are compositionally biased toward acidic residues; sequence EDDEAVQQEEVA. Residues 242-255 show a composition bias toward basic and acidic residues; that stretch reads VSKDSLEDLKKTVE.

It belongs to the universal ribosomal protein uS2 family.

This Pediococcus acidilactici protein is Small ribosomal subunit protein uS2 (rpsB).